Reading from the N-terminus, the 227-residue chain is 3,4-dihydroxy-2-butanone 4-phosphate synthase (227 aa).

D-ribulose 5-phosphate contacts are provided by residues 45 to 46, Asp50, 158 to 162, and Glu182; these read RE and RRGHT. Glu46 serves as a coordination point for Mg(2+). His161 is a binding site for Mg(2+).

Belongs to the DHBP synthase family. As to quaternary structure, homodimer. Requires Mg(2+) as cofactor. Mn(2+) is required as a cofactor.

It catalyses the reaction D-ribulose 5-phosphate = (2S)-2-hydroxy-3-oxobutyl phosphate + formate + H(+). It participates in cofactor biosynthesis; riboflavin biosynthesis; 2-hydroxy-3-oxobutyl phosphate from D-ribulose 5-phosphate: step 1/1. In terms of biological role, catalyzes the conversion of D-ribulose 5-phosphate to formate and 3,4-dihydroxy-2-butanone 4-phosphate. In Ralstonia nicotianae (strain ATCC BAA-1114 / GMI1000) (Ralstonia solanacearum), this protein is 3,4-dihydroxy-2-butanone 4-phosphate synthase.